A 164-amino-acid polypeptide reads, in one-letter code: Osteocalcin 2b (164 aa).

The N-terminal stretch at 1–18 (MKSLTLLTICAVLSVSLS) is a signal peptide. The propeptide occupies 19–115 (MNDLALDVVL…LASVLLRRKR (97 aa)). Positions 30–95 (PDPAAEPAPA…EAMAEDPAAA (66 aa)) are enriched in low complexity. The tract at residues 30–99 (PDPAAEPAPA…EDPAAATEPE (70 aa)) is disordered. The Gla domain occupies 128–160 (QVESLSEVCELNLACEHMAETAGIVAAYTAYYG). Residues E130, E134, and E137 each contribute to the Ca(2+) site. 4-carboxyglutamate is present on residues E130, E134, and E137. C136 and C142 are joined by a disulfide.

Belongs to the osteocalcin/matrix Gla protein family. Gamma-carboxyglutamate residues are formed by vitamin K dependent carboxylation. These residues are essential for the binding of calcium.

The protein localises to the secreted. Binds strongly to apatite and calcium. In Oncorhynchus mykiss (Rainbow trout), this protein is Osteocalcin 2b.